Reading from the N-terminus, the 127-residue chain is Ribosome-binding factor A (127 aa).

Belongs to the RbfA family. Monomer. Binds 30S ribosomal subunits, but not 50S ribosomal subunits or 70S ribosomes.

It localises to the cytoplasm. One of several proteins that assist in the late maturation steps of the functional core of the 30S ribosomal subunit. Associates with free 30S ribosomal subunits (but not with 30S subunits that are part of 70S ribosomes or polysomes). Required for efficient processing of 16S rRNA. May interact with the 5'-terminal helix region of 16S rRNA. The chain is Ribosome-binding factor A from Chloroflexus aggregans (strain MD-66 / DSM 9485).